The chain runs to 134 residues: Shikimate kinase (134 aa).

This sequence belongs to the shikimate kinase family.

The protein resides in the cytoplasm. It carries out the reaction shikimate + ATP = 3-phosphoshikimate + ADP + H(+). Its pathway is metabolic intermediate biosynthesis; chorismate biosynthesis; chorismate from D-erythrose 4-phosphate and phosphoenolpyruvate: step 5/7. The chain is Shikimate kinase (aroK) from Neisseria gonorrhoeae.